A 79-amino-acid chain; its full sequence is Putative defensin-like protein 146 (79 aa).

The N-terminal stretch at 1–25 (MMKNQFQLSLIILTFFILLELGVMG) is a signal peptide. 4 disulfide bridges follow: cysteine 35/cysteine 78, cysteine 46/cysteine 66, cysteine 51/cysteine 72, and cysteine 55/cysteine 74.

This sequence belongs to the DEFL family.

Its subcellular location is the secreted. This is Putative defensin-like protein 146 (LCR9) from Arabidopsis thaliana (Mouse-ear cress).